Consider the following 437-residue polypeptide: tRNA pseudouridine synthase Pus10 (437 aa).

Positions 76 to 198 (VARDVVEHLS…GGGVDIQVNS (123 aa)) constitute a THUMP domain. The active-site Nucleophile is D253. Positions 321 and 394 each coordinate substrate.

It belongs to the pseudouridine synthase Pus10 family.

It carries out the reaction uridine(54) in tRNA = pseudouridine(54) in tRNA. It catalyses the reaction uridine(55) in tRNA = pseudouridine(55) in tRNA. Functionally, responsible for synthesis of pseudouridine from uracil-54 and uracil-55 in the psi GC loop of transfer RNAs. This is tRNA pseudouridine synthase Pus10 from Aeropyrum pernix (strain ATCC 700893 / DSM 11879 / JCM 9820 / NBRC 100138 / K1).